The following is a 248-amino-acid chain: 3-deoxy-manno-octulosonate cytidylyltransferase (248 aa).

This sequence belongs to the KdsB family.

It localises to the cytoplasm. It carries out the reaction 3-deoxy-alpha-D-manno-oct-2-ulosonate + CTP = CMP-3-deoxy-beta-D-manno-octulosonate + diphosphate. Its pathway is nucleotide-sugar biosynthesis; CMP-3-deoxy-D-manno-octulosonate biosynthesis; CMP-3-deoxy-D-manno-octulosonate from 3-deoxy-D-manno-octulosonate and CTP: step 1/1. The protein operates within bacterial outer membrane biogenesis; lipopolysaccharide biosynthesis. Activates KDO (a required 8-carbon sugar) for incorporation into bacterial lipopolysaccharide in Gram-negative bacteria. The chain is 3-deoxy-manno-octulosonate cytidylyltransferase from Escherichia coli O139:H28 (strain E24377A / ETEC).